A 278-amino-acid polypeptide reads, in one-letter code: Leucine-rich repeat-containing protein 10 (278 aa).

LRR repeat units follow at residues 30-51, 52-74, 76-97, 98-121, 123-143, 144-166, 167-189, and 191-213; these read LDRMVDLSGSQLRRFPVHVCSF, QELVKLYLSDNRLNSLPPELGQL, NLQILALDFNNFKALPQVVCTL, KQLCILYLGNNKLCDLPRELSLLQ, LRTLWVEANYLTKLPEVVCEL, SLLKTLHAGSNALRLLPGQLQRL, RELRTIWLSGNLLTDFPPVLLHM, and FLEIIDVDRNSIRYFPSLAHLSS. The span at 239-250 shows a compositional bias: basic and acidic residues; that stretch reads RWAEETPEPDPR. A disordered region spans residues 239–278; the sequence is RWAEETPEPDPRKARRYALAREESQEAQLPALPPLPPTNS. Residues 269-278 show a composition bias toward pro residues; it reads ALPPLPPTNS.

It is found in the nucleus. May play important roles in cardiac development and/or cardiac function. This is Leucine-rich repeat-containing protein 10 (LRRC10) from Bos taurus (Bovine).